Reading from the N-terminus, the 155-residue chain is Protein-export protein SecB (155 aa).

Belongs to the SecB family. Homotetramer, a dimer of dimers. One homotetramer interacts with 1 SecA dimer.

It is found in the cytoplasm. Functionally, one of the proteins required for the normal export of preproteins out of the cell cytoplasm. It is a molecular chaperone that binds to a subset of precursor proteins, maintaining them in a translocation-competent state. It also specifically binds to its receptor SecA. The sequence is that of Protein-export protein SecB from Escherichia coli O127:H6 (strain E2348/69 / EPEC).